The chain runs to 482 residues: GTPase Obg (482 aa).

The 158-residue stretch at 2-159 (PRFVDRVVIH…VDLTLELKTV (158 aa)) folds into the Obg domain. An OBG-type G domain is found at 160–340 (ADVGLVGFPS…LTFALWEMIV (181 aa)). Residues 166–173 (GFPSAGKS), 191–195 (FTTLV), 212–215 (DVPG), 292–295 (NKVD), and 321–323 (STL) contribute to the GTP site. Mg(2+)-binding residues include serine 173 and threonine 193. An OCT domain is found at 358 to 438 (PIPVDESGFT…IGDMTFDWEP (81 aa)). The segment at 441 to 482 (PAGVDVTMSGRGTDARIDKTDRVGAAERRQARRVRRGQVEPE) is disordered. Residues 453–469 (TDARIDKTDRVGAAERR) show a composition bias toward basic and acidic residues.

It belongs to the TRAFAC class OBG-HflX-like GTPase superfamily. OBG GTPase family. In terms of assembly, monomer. Mg(2+) is required as a cofactor.

The protein localises to the cytoplasm. Functionally, an essential GTPase which binds GTP, GDP and possibly (p)ppGpp with moderate affinity, with high nucleotide exchange rates and a fairly low GTP hydrolysis rate. Plays a role in control of the cell cycle, stress response, ribosome biogenesis and in those bacteria that undergo differentiation, in morphogenesis control. The polypeptide is GTPase Obg (Mycobacteroides abscessus (strain ATCC 19977 / DSM 44196 / CCUG 20993 / CIP 104536 / JCM 13569 / NCTC 13031 / TMC 1543 / L948) (Mycobacterium abscessus)).